The following is a 107-amino-acid chain: Precursor of CEP14 (107 aa).

The N-terminal stretch at 1–21 (MAVRLIPTIWLFIVFAVIVSA) is a signal peptide. Residues 22–92 (LPSLVSSRKL…GKLRSRHLST (71 aa)) constitute a propeptide that is removed on maturation. The N-linked (GlcNAc...) asparagine glycan is linked to N39. Residues 43–76 (REEEKSHMPHVTKTSTLSALPKGKIPNSTPSKKG) form a disordered region. 2 positions are modified to hydroxyproline: P101 and P103.

This sequence belongs to the C-terminally encoded plant signaling peptide (CEP) family. As to quaternary structure, interacts with CEP receptors (e.g. CEPR1 and CEPR2). In terms of processing, the mature small signaling peptide is generated by proteolytic processing of the longer precursor.

Its subcellular location is the secreted. The protein localises to the extracellular space. It is found in the apoplast. Functionally, extracellular signaling peptide that may regulate primary root growth rate and systemic nitrogen (N)-demand signaling. This is Precursor of CEP14 from Arabidopsis thaliana (Mouse-ear cress).